The chain runs to 502 residues: Histidine--tRNA ligase (502 aa).

This sequence belongs to the class-II aminoacyl-tRNA synthetase family. In terms of assembly, homodimer.

It localises to the cytoplasm. The enzyme catalyses tRNA(His) + L-histidine + ATP = L-histidyl-tRNA(His) + AMP + diphosphate + H(+). The chain is Histidine--tRNA ligase (hisS) from Brucella suis biovar 1 (strain 1330).